The following is a 159-amino-acid chain: MKAIYPGSFDPITYGHLDIIKRATKIFSEVYVVVMENKRKNYTFTLEERIKMIEECTENIKNVKIDYFRGLLIDYLKMHKIDVIIRGLRAVTDFEYELQMAMANKEMCPNVDTVFLMTDKKYSFISSSLVKEVAYFGGDISRWVPKSVERKLRKKVNGV.

Ser8 is a binding site for substrate. ATP is bound by residues 8–9 (SF) and His16. Residues Lys40, Leu72, and Arg86 each contribute to the substrate site. Residues 87–89 (GLR), Glu97, and 122–128 (YSFISSS) contribute to the ATP site.

The protein belongs to the bacterial CoaD family. As to quaternary structure, homohexamer. Mg(2+) is required as a cofactor.

The protein resides in the cytoplasm. It catalyses the reaction (R)-4'-phosphopantetheine + ATP + H(+) = 3'-dephospho-CoA + diphosphate. Its pathway is cofactor biosynthesis; coenzyme A biosynthesis; CoA from (R)-pantothenate: step 4/5. Its function is as follows. Reversibly transfers an adenylyl group from ATP to 4'-phosphopantetheine, yielding dephospho-CoA (dPCoA) and pyrophosphate. The polypeptide is Phosphopantetheine adenylyltransferase (Thermosipho melanesiensis (strain DSM 12029 / CIP 104789 / BI429)).